The following is a 472-amino-acid chain: Exodeoxyribonuclease 7 large subunit (472 aa).

This sequence belongs to the XseA family. In terms of assembly, heterooligomer composed of large and small subunits.

The protein localises to the cytoplasm. It carries out the reaction Exonucleolytic cleavage in either 5'- to 3'- or 3'- to 5'-direction to yield nucleoside 5'-phosphates.. Functionally, bidirectionally degrades single-stranded DNA into large acid-insoluble oligonucleotides, which are then degraded further into small acid-soluble oligonucleotides. The protein is Exodeoxyribonuclease 7 large subunit of Carboxydothermus hydrogenoformans (strain ATCC BAA-161 / DSM 6008 / Z-2901).